A 333-amino-acid polypeptide reads, in one-letter code: D-threonate 4-phosphate dehydrogenase (333 aa).

Residues histidine 140 and threonine 141 each contribute to the substrate site. A divalent metal cation is bound by residues histidine 170, histidine 214, and histidine 270. The substrate site is built by lysine 278, asparagine 287, and arginine 296.

The protein belongs to the PdxA family. PdxA2 subfamily. As to quaternary structure, homodimer. The cofactor is a divalent metal cation.

It catalyses the reaction 4-O-phospho-D-threonate + NAD(+) = dihydroxyacetone phosphate + CO2 + NADH. Its function is as follows. Catalyzes the NAD-dependent oxidation and subsequent decarboxylation of D-threonate 4-phosphate to produce dihydroxyacetone phosphate (DHAP). Can also use 4-hydroxy-L-threonine 4-phosphate as substrate. In Cupriavidus necator (strain ATCC 17699 / DSM 428 / KCTC 22496 / NCIMB 10442 / H16 / Stanier 337) (Ralstonia eutropha), this protein is D-threonate 4-phosphate dehydrogenase.